The chain runs to 229 residues: Enolase-phosphatase E1 (229 aa).

The span at 208 to 218 shows a compositional bias: polar residues; it reads DTQSTHRQVSS. Residues 208–229 form a disordered region; it reads DTQSTHRQVSSFDDIHPEQIPT. A compositionally biased stretch (basic and acidic residues) spans 220–229; that stretch reads DDIHPEQIPT.

Belongs to the HAD-like hydrolase superfamily. MasA/MtnC family. In terms of assembly, monomer. It depends on Mg(2+) as a cofactor.

The catalysed reaction is 5-methylsulfanyl-2,3-dioxopentyl phosphate + H2O = 1,2-dihydroxy-5-(methylsulfanyl)pent-1-en-3-one + phosphate. It functions in the pathway amino-acid biosynthesis; L-methionine biosynthesis via salvage pathway; L-methionine from S-methyl-5-thio-alpha-D-ribose 1-phosphate: step 3/6. It participates in amino-acid biosynthesis; L-methionine biosynthesis via salvage pathway; L-methionine from S-methyl-5-thio-alpha-D-ribose 1-phosphate: step 4/6. In terms of biological role, bifunctional enzyme that catalyzes the enolization of 2,3-diketo-5-methylthiopentyl-1-phosphate (DK-MTP-1-P) into the intermediate 2-hydroxy-3-keto-5-methylthiopentenyl-1-phosphate (HK-MTPenyl-1-P), which is then dephosphorylated to form the acireductone 1,2-dihydroxy-3-keto-5-methylthiopentene (DHK-MTPene). The protein is Enolase-phosphatase E1 of Cronobacter sakazakii (strain ATCC BAA-894) (Enterobacter sakazakii).